Reading from the N-terminus, the 181-residue chain is Thioredoxin-like protein CITRX2, chloroplastic (181 aa).

The N-terminal 70 residues, 1-70 (MQAATLSFQP…PDVATGKYVR (70 aa)), are a transit peptide targeting the chloroplast. Residues 72 to 181 (DYLVKKVSAK…MMRDIINNDL (110 aa)) form the Thioredoxin domain. Active-site nucleophile residues include C104 and C107. Cysteines 104 and 107 form a disulfide.

This sequence belongs to the thioredoxin family. Plant CITRX-type subfamily.

The protein resides in the plastid. Its subcellular location is the chloroplast. Functionally, probable thiol-disulfide oxidoreductase that may play a role in proper chloroplast development. This chain is Thioredoxin-like protein CITRX2, chloroplastic, found in Nicotiana benthamiana.